The primary structure comprises 906 residues: Peroxisomal hydratase-dehydrogenase-epimerase (906 aa).

2 short-chain dehydrogenase like regions span residues 5 to 228 (DFKD…SSAE) and 319 to 532 (SLKD…GTDD). 4 residues coordinate NADP(+): I13, K52, N98, and K131. Active-site proton donor residues include S149 and Y163. Residues Y163 and K167 each contribute to the NADP(+) site. Y163 functions as the Proton acceptor in the catalytic mechanism. K167 acts as the Lowers pKa of active site Tyr in catalysis. Y467 serves as the catalytic Proton acceptor. The segment at 600 to 633 (AVGGDDDDDDEDEEEDEGDEEEDEEDEEEDDPVW) is disordered. The segment covering 603 to 630 (GDDDDDDEDEEEDEGDEEEDEEDEEEDD) has biased composition (acidic residues). (3R)-3-hydroxydecanoyl-CoA-binding residues include H699, G700, K729, Y757, D808, N810, G831, F856, T857, and G858. In terms of domain architecture, MaoC-like spans 782–893 (APKRAPDYQV…VVDRGTIAIN (112 aa)). The short motif at 904–906 (AKI) is the Microbody targeting signal element.

This sequence belongs to the short-chain dehydrogenases/reductases (SDR) family. Monomer.

It localises to the peroxisome. It carries out the reaction a (3R)-3-hydroxyacyl-CoA = a (2E)-enoyl-CoA + H2O. The enzyme catalyses a (3R)-3-hydroxyacyl-CoA + NAD(+) = a 3-oxoacyl-CoA + NADH + H(+). It participates in lipid metabolism; fatty acid beta-oxidation. Its function is as follows. Second trifunctional enzyme acting on the beta-oxidation pathway for fatty acids, possessing hydratase-dehydrogenase-epimerase activities. Converts trans-2-enoyl-CoA via D-3-hydroxyacyl-CoA to 3-ketoacyl-CoA. The protein is Peroxisomal hydratase-dehydrogenase-epimerase of Candida tropicalis (Yeast).